Here is a 353-residue protein sequence, read N- to C-terminus: Protein RecA (353 aa).

Position 80 to 87 (80 to 87 (GPESSGKT)) interacts with ATP.

Belongs to the RecA family.

It is found in the cytoplasm. In terms of biological role, can catalyze the hydrolysis of ATP in the presence of single-stranded DNA, the ATP-dependent uptake of single-stranded DNA by duplex DNA, and the ATP-dependent hybridization of homologous single-stranded DNAs. It interacts with LexA causing its activation and leading to its autocatalytic cleavage. The sequence is that of Protein RecA from Chlorobium chlorochromatii (strain CaD3).